The chain runs to 488 residues: Ribulose bisphosphate carboxylase large chain (488 aa).

2 residues coordinate substrate: Asn-127 and Thr-177. Lys-179 (proton acceptor) is an active-site residue. Lys-181 contributes to the substrate binding site. Mg(2+)-binding residues include Lys-205, Asp-207, and Glu-208. Lys-205 carries the N6-carboxylysine modification. The Proton acceptor role is filled by His-297. 3 residues coordinate substrate: Arg-298, His-330, and Ser-382.

It belongs to the RuBisCO large chain family. Type I subfamily. As to quaternary structure, heterohexadecamer of 8 large chains and 8 small chains. Mg(2+) is required as a cofactor.

The protein resides in the plastid. The protein localises to the chloroplast. It catalyses the reaction 2 (2R)-3-phosphoglycerate + 2 H(+) = D-ribulose 1,5-bisphosphate + CO2 + H2O. The catalysed reaction is D-ribulose 1,5-bisphosphate + O2 = 2-phosphoglycolate + (2R)-3-phosphoglycerate + 2 H(+). RuBisCO catalyzes two reactions: the carboxylation of D-ribulose 1,5-bisphosphate, the primary event in carbon dioxide fixation, as well as the oxidative fragmentation of the pentose substrate in the photorespiration process. Both reactions occur simultaneously and in competition at the same active site. The chain is Ribulose bisphosphate carboxylase large chain from Cyanidioschyzon merolae (strain NIES-3377 / 10D) (Unicellular red alga).